A 136-amino-acid chain; its full sequence is MAKSDVKGINLGMGTGRRKSSVARVYIREGKGDIKINSRDFDSYMQLEKLKTIALSPLVLTNTLGKYDLYINIYGGGISGQAGAIRHGIARALFNLDEEHKMILKSNGFLTRDPRKVERKKFGKKKARKSFQFSKR.

Belongs to the universal ribosomal protein uS9 family.

The chain is Small ribosomal subunit protein uS9 from Borrelia hermsii (strain HS1 / DAH).